Reading from the N-terminus, the 854-residue chain is Patatin-like phospholipase domain-containing protein CHGG_02900 (854 aa).

3 disordered regions span residues 1–29, 58–138, and 159–186; these read MAGP…YGFP, LSAP…PPLS, and QRRV…RSKD. Positions 96 to 116 are enriched in basic and acidic residues; it reads DLARRPESSGVGFHDEDRTAR. Residues 119-132 are compositionally biased toward low complexity; it reads PAGAATAAAAGVAT. The helical transmembrane segment at 199 to 219 threads the bilayer; sequence WPLLGVVTCWLVGLSVVHVLA. The PNPLA domain occupies 387-578; sequence LCLSGGATFA…RTDIPIKALN (192 aa). Positions 418-422 match the GXSXG motif; sequence GTSGG. Residue Ser-420 is the Nucleophile of the active site. Residue Asp-565 is the Proton acceptor of the active site. Disordered regions lie at residues 724–776 and 791–830; these read RENR…SILS and RGGI…LEFG. Positions 729 to 751 are enriched in gly residues; it reads GGGLGDGGVGSSGGAGGGAGGGQ. A compositionally biased stretch (low complexity) spans 752-761; that stretch reads AEAVAGQAAG. Over residues 799-812 the composition is skewed to acidic residues; sequence TESEDETSDLDADF.

It belongs to the PLPL family.

The protein localises to the membrane. Probable lipid hydrolase. This Chaetomium globosum (strain ATCC 6205 / CBS 148.51 / DSM 1962 / NBRC 6347 / NRRL 1970) (Soil fungus) protein is Patatin-like phospholipase domain-containing protein CHGG_02900.